Reading from the N-terminus, the 565-residue chain is Sulfite reductase [NADPH] hemoprotein beta-component (565 aa).

4 residues coordinate [4Fe-4S] cluster: cysteine 429, cysteine 435, cysteine 474, and cysteine 478. Position 478 (cysteine 478) interacts with siroheme.

Belongs to the nitrite and sulfite reductase 4Fe-4S domain family. Alpha(8)-beta(8). The alpha component is a flavoprotein, the beta component is a hemoprotein. Siroheme serves as cofactor. The cofactor is [4Fe-4S] cluster.

It carries out the reaction hydrogen sulfide + 3 NADP(+) + 3 H2O = sulfite + 3 NADPH + 4 H(+). It participates in sulfur metabolism; hydrogen sulfide biosynthesis; hydrogen sulfide from sulfite (NADPH route): step 1/1. Functionally, component of the sulfite reductase complex that catalyzes the 6-electron reduction of sulfite to sulfide. This is one of several activities required for the biosynthesis of L-cysteine from sulfate. This chain is Sulfite reductase [NADPH] hemoprotein beta-component, found in Shewanella baltica (strain OS223).